Consider the following 140-residue polypeptide: Protein E6 (140 aa).

2 zinc fingers span residues 27–63 (CIFC…CSEC) and 100–136 (CICC…CRNC).

It belongs to the papillomaviridae E6 protein family. In terms of assembly, forms homodimers. Interacts with ubiquitin-protein ligase UBE3A/E6-AP; this interaction stimulates UBE3A ubiquitin activity. Interacts with host BAK1.

The protein resides in the host cytoplasm. Its subcellular location is the host nucleus. Functionally, plays a major role in the induction and maintenance of cellular transformation. E6 associates with host UBE3A/E6-AP ubiquitin-protein ligase and modulates its activity. Protects host keratinocytes from apoptosis by mediating the degradation of host BAK1. May also inhibit host immune response. The sequence is that of Protein E6 from Human papillomavirus 4.